The sequence spans 361 residues: Methylthioribose-1-phosphate isomerase (361 aa).

The Proton donor role is filled by Asp245.

The protein belongs to the eIF-2B alpha/beta/delta subunits family. MtnA subfamily.

It is found in the cytoplasm. It localises to the nucleus. The catalysed reaction is 5-(methylsulfanyl)-alpha-D-ribose 1-phosphate = 5-(methylsulfanyl)-D-ribulose 1-phosphate. The protein operates within amino-acid biosynthesis; L-methionine biosynthesis via salvage pathway; L-methionine from S-methyl-5-thio-alpha-D-ribose 1-phosphate: step 1/6. Its function is as follows. Catalyzes the interconversion of methylthioribose-1-phosphate (MTR-1-P) into methylthioribulose-1-phosphate (MTRu-1-P). In Monosiga brevicollis (Choanoflagellate), this protein is Methylthioribose-1-phosphate isomerase.